The sequence spans 207 residues: Early nodulin-like protein 11 (207 aa).

Positions 1–24 (MVSLISIVSVVFLLFTTFYHFGEA) are cleaved as a signal peptide. Residues 25–130 (RIINVGGSLD…GEKVTVVVQS (106 aa)) form the Phytocyanin domain. An N-linked (GlcNAc...) asparagine glycan is attached at N43. Cysteines 83 and 118 form a disulfide. A disordered region spans residues 129-179 (QSPNHPKPGPAAVTPTLPPKPSTTPAAPAPAPPTPSPKSSTSTMAPAPAPA). A compositionally biased stretch (pro residues) spans 144–164 (TLPPKPSTTPAAPAPAPPTPS). Positions 165-179 (PKSSTSTMAPAPAPA) are enriched in low complexity. S181 is lipidated: GPI-anchor amidated serine. Positions 182–207 (SAVGLVAGNGIFWASTLVAVIGLAFA) are cleaved as a propeptide — removed in mature form.

Belongs to the early nodulin-like (ENODL) family. As to expression, confined to flowers and siliques.

The protein resides in the cell membrane. In terms of biological role, may act as a carbohydrate transporter. Required, together with ENODL11, ENODL12, ENODL13, ENODL14 and ENODL15, for male-female communication and pollen tube reception and burst at the synergid cell surface of the female gametophyte. The polypeptide is Early nodulin-like protein 11 (Arabidopsis thaliana (Mouse-ear cress)).